We begin with the raw amino-acid sequence, 230 residues long: Ribosome biogenesis protein SLX9 homolog (230 aa).

The segment covering 1–11 (MGKVRGLRARV) has biased composition (basic residues). Disordered stretches follow at residues 1–42 (MGKV…SAAG) and 155–187 (LGLE…AQRQ). Residues 25 to 38 (GPAPPAPEATPPPA) show a composition bias toward pro residues. Residue threonine 34 is modified to Phosphothreonine. A compositionally biased stretch (basic and acidic residues) spans 166–177 (RSRESNKPRPSE). Serine 203 bears the Phosphoserine mark.

It belongs to the SLX9 family. As to expression, not detected in any tested tissue.

Its subcellular location is the nucleus. It is found in the nucleolus. Its function is as follows. May be involved in ribosome biogenesis. The chain is Ribosome biogenesis protein SLX9 homolog from Homo sapiens (Human).